A 162-amino-acid chain; its full sequence is Disulfide bond formation protein B (162 aa).

Residues 1–10 lie on the Cytoplasmic side of the membrane; it reads MGDWLLRRRG. Residues 11 to 27 form a helical membrane-spanning segment; the sequence is LALLLVLTLLLNLGALG. At 28–45 the chain is on the periplasmic side; the sequence is LEYLADMPPCPLCWVQRG. Cysteines 37 and 40 form a disulfide. A helical transmembrane segment spans residues 46–62; it reads VFGLMSLVALVGLVYFP. Topologically, residues 63–68 are cytoplasmic; sequence RGWGRW. A helical membrane pass occupies residues 69-86; sequence PLAGALGLSALTGVIIAL. Topologically, residues 87-140 are periplasmic; it reads RHLYIQANPDAVSCGMSPEVLAQFLPWWEVLLEILSGTTDCTQVDAVLGVPLPG. Cys100 and Cys127 form a disulfide bridge. Residues 141–159 form a helical membrane-spanning segment; it reads WTLVGYLALGALGLYAVLA. Residues 160 to 162 lie on the Cytoplasmic side of the membrane; sequence RRA.

The protein belongs to the DsbB family.

The protein localises to the cell inner membrane. In terms of biological role, required for disulfide bond formation in some periplasmic proteins. Acts by oxidizing the DsbA protein. This chain is Disulfide bond formation protein B, found in Alkalilimnicola ehrlichii (strain ATCC BAA-1101 / DSM 17681 / MLHE-1).